We begin with the raw amino-acid sequence, 621 residues long: Uptake hydrogenase large subunit (621 aa).

Ni(2+) contacts are provided by Cys75, Cys78, Cys600, and Cys603.

Belongs to the [NiFe]/[NiFeSe] hydrogenase large subunit family. As to quaternary structure, heterodimer of a large and a small subunit. It depends on Ni(2+) as a cofactor.

It localises to the cell membrane. The catalysed reaction is H2 + A = AH2. In terms of biological role, this enzyme recycles the H(2) produced by nitrogenase to increase the production of ATP and to protect nitrogenase against inhibition or damage by O(2) under carbon- or phosphate-limited conditions. The chain is Uptake hydrogenase large subunit (hupL) from Alcaligenes hydrogenophilus.